Here is a 90-residue protein sequence, read N- to C-terminus: Acylphosphatase (90 aa).

The 86-residue stretch at 5-90 (SYLFNVKGKV…WQELTDFKMY (86 aa)) folds into the Acylphosphatase-like domain. Catalysis depends on residues Arg20 and Asn38.

Belongs to the acylphosphatase family.

It carries out the reaction an acyl phosphate + H2O = a carboxylate + phosphate + H(+). In Aliivibrio fischeri (strain ATCC 700601 / ES114) (Vibrio fischeri), this protein is Acylphosphatase (acyP).